The following is a 426-amino-acid chain: Probable alpha-galactosidase B (426 aa).

The first 13 residues, Met1–Ala13, serve as a signal peptide directing secretion. 2 cysteine pairs are disulfide-bonded: Cys24–Cys56 and Cys106–Cys136. Asp134 acts as the Nucleophile in catalysis. N-linked (GlcNAc...) asparagine glycosylation is found at Asn141 and Asn159. Glu204–Ala208 contributes to the substrate binding site. N-linked (GlcNAc...) asparagine glycosylation occurs at Asn215. The Proton donor role is filled by Asp226. N-linked (GlcNAc...) asparagine glycosylation occurs at Asn265.

This sequence belongs to the glycosyl hydrolase 27 family.

It localises to the secreted. The enzyme catalyses Hydrolysis of terminal, non-reducing alpha-D-galactose residues in alpha-D-galactosides, including galactose oligosaccharides, galactomannans and galactolipids.. Its function is as follows. Hydrolyzes a variety of simple alpha-D-galactoside as well as more complex molecules such as oligosaccharides and polysaccharides. This Aspergillus fumigatus (strain CBS 144.89 / FGSC A1163 / CEA10) (Neosartorya fumigata) protein is Probable alpha-galactosidase B (aglB).